The chain runs to 1138 residues: 2'-5'-oligoadenylate synthase 3 (1138 aa).

The residue at position 1 (M1) is an N-acetylmethionine. An OAS domain 1 region spans residues 6-341; the sequence is TPAGALDKLV…GVLVQPWEGP (336 aa). 2 interaction with dsRNA regions span residues 12 to 56 and 185 to 199; these read DKLV…VIRI and EPRKNFVNTRPAKLK. Residues 342–462 form a linker region; sequence GLPRAGILDL…GSRMSPDLSQ (121 aa). Positions 370 to 379 are enriched in basic and acidic residues; that stretch reads LAVQSKERSQ. Disordered stretches follow at residues 370–403 and 434–459; these read LAVQSKERSQKPSNSAPGFPEAATKIPAMPNPSA and TQSTASSHMPPDRSSISTAGSRMSPD. Positions 447–459 are enriched in polar residues; the sequence is SSISTAGSRMSPD. OAS domain stretches follow at residues 463-793 and 801-1135; these read IPSK…PWDV and TLAE…WPVK. S855 contributes to the ATP binding site. Mg(2+)-binding residues include D867, D869, and D939. Positions 998, 1001, and 1020 each coordinate ATP.

Belongs to the 2-5A synthase family. As to quaternary structure, monomer. Requires Mg(2+) as cofactor. As to expression, intestine.

The protein localises to the cytoplasm. Its subcellular location is the nucleus. The enzyme catalyses 3 ATP = 5'-triphosphoadenylyl-(2'-&gt;5')-adenylyl-(2'-&gt;5')-adenosine + 2 diphosphate. Produced as a latent enzyme which is activated by dsRNA generated during the course of viral infection. Strongly activated by long dsRNAs at least 50 nucleotides in length. ssRNA does not activate the enzyme. Its function is as follows. Interferon-induced, dsRNA-activated antiviral enzyme which plays a critical role in cellular innate antiviral response. In addition, it may also play a role in other cellular processes such as apoptosis, cell growth, differentiation and gene regulation. Synthesizes preferentially dimers of 2'-5'-oligoadenylates (2-5A) from ATP which then bind to the inactive monomeric form of ribonuclease L (RNase L) leading to its dimerization and subsequent activation. Activation of RNase L leads to degradation of cellular as well as viral RNA, resulting in the inhibition of protein synthesis, thus terminating viral replication. Can mediate the antiviral effect via the classical RNase L-dependent pathway or an alternative antiviral pathway independent of RNase L. In Mus musculus (Mouse), this protein is 2'-5'-oligoadenylate synthase 3 (Oas3).